A 735-amino-acid polypeptide reads, in one-letter code: Ribosomal protein S6 kinase alpha-1 (735 aa).

Phosphoserine is present on serine 54. Positions 62-321 (FELLKVLGQG…AEEIKRHVFY (260 aa)) constitute a Protein kinase 1 domain. ATP is bound by residues 68-76 (LGQGSFGKV) and lysine 94. The Proton acceptor role is filled by aspartate 187. Serine 221 bears the Phosphoserine; by PDPK1 mark. Serine 307 is modified (phosphoserine). Residues 322 to 391 (STIDWNKLYR…VATGLMEDDG (70 aa)) enclose the AGC-kinase C-terminal domain. Threonine 359 carries the post-translational modification Phosphothreonine. Serine 363 and serine 369 each carry phosphoserine. The residue at position 380 (serine 380) is a Phosphoserine; by autocatalysis. The region spanning 418 to 675 (YVVKETIGVG…AKQVLQHPWV (258 aa)) is the Protein kinase 2 domain. Residues 424–432 (IGVGSYSEC) and lysine 447 each bind ATP. The active-site Proton acceptor is aspartate 535. Position 573 is a phosphothreonine (threonine 573). Serine 732 bears the Phosphoserine mark.

This sequence belongs to the protein kinase superfamily. AGC Ser/Thr protein kinase family. S6 kinase subfamily. As to quaternary structure, forms a complex with either MAPK1/ERK2 or MAPK3/ERK1 in quiescent cells. Transiently dissociates following mitogenic stimulation. Interacts with ETV1/ER81 and FGFR1. In terms of assembly, (Microbial infection) Interacts with Kaposi's sarcoma-associated herpesvirus/HHV-8 protein ORF45; this interaction allows RPS6KA1 activation. Mg(2+) serves as cofactor. Activated by phosphorylation at Ser-221 by PDPK1. Autophosphorylated on Ser-380, as part of the activation process. May be phosphorylated at Thr-359 and Ser-363 by MAPK1/ERK2 and MAPK3/ERK1. In terms of processing, N-terminal myristoylation results in an activated kinase in the absence of added growth factors.

The protein resides in the nucleus. The protein localises to the cytoplasm. The enzyme catalyses L-seryl-[protein] + ATP = O-phospho-L-seryl-[protein] + ADP + H(+). It catalyses the reaction L-threonyl-[protein] + ATP = O-phospho-L-threonyl-[protein] + ADP + H(+). Upon extracellular signal or mitogen stimulation, phosphorylated at Thr-573 in the C-terminal kinase domain (CTKD) by MAPK1/ERK2 and MAPK3/ERK1. The activated CTKD then autophosphorylates Ser-380, allowing binding of PDPK1, which in turn phosphorylates Ser-221 in the N-terminal kinase domain (NTDK) leading to the full activation of the protein and subsequent phosphorylation of the substrates by the NTKD. Functionally, serine/threonine-protein kinase that acts downstream of ERK (MAPK1/ERK2 and MAPK3/ERK1) signaling and mediates mitogenic and stress-induced activation of the transcription factors CREB1, ETV1/ER81 and NR4A1/NUR77, regulates translation through RPS6 and EIF4B phosphorylation, and mediates cellular proliferation, survival, and differentiation by modulating mTOR signaling and repressing pro-apoptotic function of BAD and DAPK1. In fibroblast, is required for EGF-stimulated phosphorylation of CREB1, which results in the subsequent transcriptional activation of several immediate-early genes. In response to mitogenic stimulation (EGF and PMA), phosphorylates and activates NR4A1/NUR77 and ETV1/ER81 transcription factors and the cofactor CREBBP. Upon insulin-derived signal, acts indirectly on the transcription regulation of several genes by phosphorylating GSK3B at 'Ser-9' and inhibiting its activity. Phosphorylates RPS6 in response to serum or EGF via an mTOR-independent mechanism and promotes translation initiation by facilitating assembly of the pre-initiation complex. In response to insulin, phosphorylates EIF4B, enhancing EIF4B affinity for the EIF3 complex and stimulating cap-dependent translation. Is involved in the mTOR nutrient-sensing pathway by directly phosphorylating TSC2 at 'Ser-1798', which potently inhibits TSC2 ability to suppress mTOR signaling, and mediates phosphorylation of RPTOR, which regulates mTORC1 activity and may promote rapamycin-sensitive signaling independently of the PI3K/AKT pathway. Also involved in feedback regulation of mTORC1 and mTORC2 by phosphorylating DEPTOR. Mediates cell survival by phosphorylating the pro-apoptotic proteins BAD and DAPK1 and suppressing their pro-apoptotic function. Promotes the survival of hepatic stellate cells by phosphorylating CEBPB in response to the hepatotoxin carbon tetrachloride (CCl4). Mediates induction of hepatocyte prolifration by TGFA through phosphorylation of CEBPB. Is involved in cell cycle regulation by phosphorylating the CDK inhibitor CDKN1B, which promotes CDKN1B association with 14-3-3 proteins and prevents its translocation to the nucleus and inhibition of G1 progression. Phosphorylates EPHA2 at 'Ser-897', the RPS6KA-EPHA2 signaling pathway controls cell migration. In response to mTORC1 activation, phosphorylates EIF4B at 'Ser-406' and 'Ser-422' which stimulates bicarbonate cotransporter SLC4A7 mRNA translation, increasing SLC4A7 protein abundance and function. Its function is as follows. (Microbial infection) Promotes the late transcription and translation of viral lytic genes during Kaposi's sarcoma-associated herpesvirus/HHV-8 infection, when constitutively activated. This is Ribosomal protein S6 kinase alpha-1 (RPS6KA1) from Homo sapiens (Human).